Consider the following 515-residue polypeptide: 1-pyrroline-5-carboxylate dehydrogenase 2 (515 aa).

Residues E286 and C320 contribute to the active site.

It belongs to the aldehyde dehydrogenase family. RocA subfamily.

It catalyses the reaction L-glutamate 5-semialdehyde + NAD(+) + H2O = L-glutamate + NADH + 2 H(+). The protein operates within amino-acid degradation; L-proline degradation into L-glutamate; L-glutamate from L-proline: step 2/2. Functionally, important for the use of proline as a sole carbon and energy source or a sole nitrogen source. In Bacillus subtilis (strain 168), this protein is 1-pyrroline-5-carboxylate dehydrogenase 2.